Here is a 381-residue protein sequence, read N- to C-terminus: 4-hydroxy-3-methylbut-2-en-1-yl diphosphate synthase (flavodoxin) (381 aa).

Residues C273, C276, C308, and E315 each contribute to the [4Fe-4S] cluster site.

The protein belongs to the IspG family. It depends on [4Fe-4S] cluster as a cofactor.

The catalysed reaction is (2E)-4-hydroxy-3-methylbut-2-enyl diphosphate + oxidized [flavodoxin] + H2O + 2 H(+) = 2-C-methyl-D-erythritol 2,4-cyclic diphosphate + reduced [flavodoxin]. It participates in isoprenoid biosynthesis; isopentenyl diphosphate biosynthesis via DXP pathway; isopentenyl diphosphate from 1-deoxy-D-xylulose 5-phosphate: step 5/6. In terms of biological role, converts 2C-methyl-D-erythritol 2,4-cyclodiphosphate (ME-2,4cPP) into 1-hydroxy-2-methyl-2-(E)-butenyl 4-diphosphate. The protein is 4-hydroxy-3-methylbut-2-en-1-yl diphosphate synthase (flavodoxin) of Gluconobacter oxydans (strain 621H) (Gluconobacter suboxydans).